We begin with the raw amino-acid sequence, 230 residues long: UPF0702 transmembrane protein YcaP (230 aa).

3 helical membrane passes run 16 to 36 (FDFL…VFLF), 48 to 68 (MSLF…DVAF), and 75 to 95 (VPVL…MWLM).

Belongs to the UPF0702 family.

The protein localises to the cell membrane. This Escherichia coli (strain K12) protein is UPF0702 transmembrane protein YcaP (ycaP).